The primary structure comprises 281 residues: Putative E3 ubiquitin-protein ligase SINA-like 6 (281 aa).

The disordered stretch occupies residues 1 to 26 (MVGVLLSERNGSQKRHCSSISSDDGR). The segment at 45–81 (CPICYQALKIPVFQCGNGHLACSSCCPKLRNKCPACA) adopts an RING-type zinc-finger fold. The segment at 95–280 (VLESVLVPCR…MMLCINELKQ (186 aa)) is SBD. The SIAH-type zinc finger occupies 98 to 156 (SVLVPCRYADLGCTKTIYYGRESTHEKICNFSPCSCPVQGCNYTGSYKDLYEHYDLTHS). Positions 103, 110, 122, 126, 133, 138, 150, and 155 each coordinate Zn(2+).

It belongs to the SINA (Seven in absentia) family.

It catalyses the reaction S-ubiquitinyl-[E2 ubiquitin-conjugating enzyme]-L-cysteine + [acceptor protein]-L-lysine = [E2 ubiquitin-conjugating enzyme]-L-cysteine + N(6)-ubiquitinyl-[acceptor protein]-L-lysine.. It participates in protein modification; protein ubiquitination. Functionally, E3 ubiquitin-protein ligase that mediates ubiquitination and subsequent proteasomal degradation of target proteins. E3 ubiquitin ligases accept ubiquitin from an E2 ubiquitin-conjugating enzyme in the form of a thioester and then directly transfers the ubiquitin to targeted substrates. It probably triggers the ubiquitin-mediated degradation of different substrates. In Arabidopsis thaliana (Mouse-ear cress), this protein is Putative E3 ubiquitin-protein ligase SINA-like 6.